The primary structure comprises 552 residues: TBCC domain-containing protein 1 (552 aa).

The C-CAP/cofactor C-like domain maps to P304–L435.

It belongs to the TBCC family. As to expression, expressed in brain and testis (at protein level).

It localises to the cytoplasm. It is found in the cytoskeleton. The protein resides in the microtubule organizing center. The protein localises to the centrosome. Its subcellular location is the spindle pole. Its function is as follows. Plays a role in the regulation of centrosome and Golgi apparatus positioning, with consequences on cell shape and cell migration. This Mus musculus (Mouse) protein is TBCC domain-containing protein 1 (Tbccd1).